The chain runs to 87 residues: Putative defensin-like protein 317 (87 aa).

A signal peptide spans 1-24 (MKSFLVAFLIVLVFFCVEMKIGNG). Cystine bridges form between cysteine 38-cysteine 71, cysteine 47-cysteine 80, and cysteine 56-cysteine 82.

This sequence belongs to the DEFL family.

Its subcellular location is the secreted. The polypeptide is Putative defensin-like protein 317 (Arabidopsis thaliana (Mouse-ear cress)).